Here is a 290-residue protein sequence, read N- to C-terminus: MKYRKFIILVLSILIILPVSTLDGHHIANADDDSPKKLKYKENSALALNYHRVRKANFLNNFIYFFSSSKEIKNYSVSQSQFESQIKWLKSHDAKFLTLKEFLYYKKKGKFPKRSVWINFDDMDETIYENAYPILKKYKIPATGFIITGHVGEENFHNLDMISKKELKEMYKTGLWEFETHTHDLHNLSKNNKSKLMKASEATIIKDLNKSEKYLTKNFKKSQKTIAYPYGLMNDDKLPVIKKAGLKYGFSLEEKAVTPNSNDYYIPRILISDDAFEHLIKRWDGFHEKD.

The signal sequence occupies residues 1 to 28 (MKYRKFIILVLSILIILPVSTLDGHHIA). The region spanning 114-290 (RSVWINFDDM…KRWDGFHEKD (177 aa)) is the NodB homology domain.

The protein belongs to the polysaccharide deacetylase family.

Its subcellular location is the secreted. The protein resides in the cell wall. Functionally, catalyzes the N-deacetylation of poly-beta-1,6-N-acetyl-D-glucosamine (PNAG, also referred to as PIA), a biofilm adhesin polysaccharide. N-deacetylation is crucial for attachment of the polysaccharide to the bacterial cell surface; it leads to the introduction of positive charges in the otherwise neutral PIA polymer, allowing electrostatic interactions. This is Poly-beta-1,6-N-acetyl-D-glucosamine N-deacetylase (icaB) from Staphylococcus aureus (strain NCTC 8325 / PS 47).